Reading from the N-terminus, the 132-residue chain is Large ribosomal subunit protein uL14 (132 aa).

Belongs to the universal ribosomal protein uL14 family. As to quaternary structure, part of the 50S ribosomal subunit. Forms a cluster with proteins L3 and L24e, part of which may contact the 16S rRNA in 2 intersubunit bridges.

In terms of biological role, binds to 23S rRNA. Forms part of two intersubunit bridges in the 70S ribosome. The chain is Large ribosomal subunit protein uL14 from Methanobrevibacter smithii (strain ATCC 35061 / DSM 861 / OCM 144 / PS).